The following is a 273-amino-acid chain: Cytochrome b-c1 complex subunit Rieske, mitochondrial (273 aa).

A mitochondrion-targeting transit peptide spans 1 to 61; that stretch reads MLRVAGRRLS…PFFVASRGFS (61 aa). Positions 25–46 are disordered; the sequence is PLAGAGVPDRDDDSARGRSQPR. Over 62–110 the chain is Mitochondrial matrix; that stretch reads STETVVPRNQDAGLADLPATVAAVKNPNPKVVYDEYNHERYPPGDPSKR. The helical transmembrane segment at 111 to 133 threads the bilayer; it reads AFAYFVLSGGRFIYASLLRLLVL. The Mitochondrial intermembrane portion of the chain corresponds to 134 to 273; the sequence is KFVLSMSASK…FLEENKLLVG (140 aa). The 96-residue stretch at 176-271 folds into the Rieske domain; that stretch reads RRRTEDDIKL…YSFLEENKLL (96 aa). The [2Fe-2S] cluster site is built by Cys216, His218, Cys235, and His238. Residues Cys221 and Cys237 are joined by a disulfide bond.

The protein belongs to the Rieske iron-sulfur protein family. Component of the ubiquinol-cytochrome c oxidoreductase (cytochrome b-c1 complex, complex III, CIII), a multisubunit enzyme composed of 3 respiratory subunits cytochrome b, cytochrome c1 and Rieske protein, 2 core protein subunits, and several low-molecular weight protein subunits. The complex exists as an obligatory dimer and forms supercomplexes (SCs) in the inner mitochondrial membrane with cytochrome c oxidase (complex IV, CIV). [2Fe-2S] cluster is required as a cofactor.

The protein resides in the mitochondrion inner membrane. The catalysed reaction is a quinol + 2 Fe(III)-[cytochrome c](out) = a quinone + 2 Fe(II)-[cytochrome c](out) + 2 H(+)(out). Component of the ubiquinol-cytochrome c oxidoreductase, a multisubunit transmembrane complex that is part of the mitochondrial electron transport chain which drives oxidative phosphorylation. The respiratory chain contains 3 multisubunit complexes succinate dehydrogenase (complex II, CII), ubiquinol-cytochrome c oxidoreductase (cytochrome b-c1 complex, complex III, CIII) and cytochrome c oxidase (complex IV, CIV), that cooperate to transfer electrons derived from NADH and succinate to molecular oxygen, creating an electrochemical gradient over the inner membrane that drives transmembrane transport and the ATP synthase. The cytochrome b-c1 complex catalyzes electron transfer from ubiquinol to cytochrome c, linking this redox reaction to translocation of protons across the mitochondrial inner membrane, with protons being carried across the membrane as hydrogens on the quinol. In the process called Q cycle, 2 protons are consumed from the matrix, 4 protons are released into the intermembrane space and 2 electrons are passed to cytochrome c. The Rieske protein is a catalytic core subunit containing a [2Fe-2S] iron-sulfur cluster. It cycles between 2 conformational states during catalysis to transfer electrons from the quinol bound in the Q(0) site in cytochrome b to cytochrome c1. The sequence is that of Cytochrome b-c1 complex subunit Rieske, mitochondrial from Zea mays (Maize).